Here is a 298-residue protein sequence, read N- to C-terminus: Protein ABIL1 (298 aa).

The protein belongs to the ABI family. In terms of assembly, binds SCAR2. Expressed in seedlings, roots, hypocotyls, cotyledons, leaves, stems, and flowers.

Its subcellular location is the cytoplasm. It is found in the cytoskeleton. Functionally, involved in regulation of actin and microtubule organization. Part of a WAVE complex that activates the Arp2/3 complex. This is Protein ABIL1 (ABIL1) from Arabidopsis thaliana (Mouse-ear cress).